We begin with the raw amino-acid sequence, 438 residues long: Ribosomal protein uS12 methylthiotransferase RimO (438 aa).

The MTTase N-terminal domain occupies 1-115; the sequence is MKYFILSLGC…LDKLLADLGE (115 aa). [4Fe-4S] cluster is bound by residues cysteine 10, cysteine 46, cysteine 78, cysteine 150, cysteine 154, and cysteine 157. The region spanning 136 to 366 is the Radical SAM core domain; the sequence is KSNEVYRYIK…MEVQQEISLN (231 aa). The TRAM domain maps to 369-437; sequence KALVGKKIPV…IYDLKGEFIN (69 aa).

The protein belongs to the methylthiotransferase family. RimO subfamily. Requires [4Fe-4S] cluster as cofactor.

It is found in the cytoplasm. The catalysed reaction is L-aspartate(89)-[ribosomal protein uS12]-hydrogen + (sulfur carrier)-SH + AH2 + 2 S-adenosyl-L-methionine = 3-methylsulfanyl-L-aspartate(89)-[ribosomal protein uS12]-hydrogen + (sulfur carrier)-H + 5'-deoxyadenosine + L-methionine + A + S-adenosyl-L-homocysteine + 2 H(+). Catalyzes the methylthiolation of an aspartic acid residue of ribosomal protein uS12. This is Ribosomal protein uS12 methylthiotransferase RimO from Carboxydothermus hydrogenoformans (strain ATCC BAA-161 / DSM 6008 / Z-2901).